The chain runs to 200 residues: Endochitinase (200 aa).

Glu-58 acts as the Proton donor in catalysis.

The protein belongs to the glycosyl hydrolase 19 family. Chitinase class I subfamily.

It carries out the reaction Random endo-hydrolysis of N-acetyl-beta-D-glucosaminide (1-&gt;4)-beta-linkages in chitin and chitodextrins.. In terms of biological role, this protein functions as a defense against chitin-containing fungal pathogens. This chain is Endochitinase, found in Avena sativa (Oat).